A 285-amino-acid polypeptide reads, in one-letter code: Neuralized-like protein 2 (285 aa).

The interval 1-20 is disordered; it reads MAAASEPVDSGALWGLERPE. Residues 23–244 enclose the NHR domain; sequence PTRFHRVHGA…STKSVRLVQL (222 aa). Residues 250–285 enclose the SOCS box domain; the sequence is SLQTLCRLVIQRSMVHRLAIDGLHLPKELKDFCKYE.

As to quaternary structure, probable component the ECS(NEURL2) E3 ubiquitin-protein ligase complex consisting of ELOB/Elongin B, ELOC/Elongin C, CUL5, RBX1 and NEURL2. Interacts with CTNNB1. As to expression, expressed specifically in skeletal and cardiac muscles.

It localises to the cytoplasm. It functions in the pathway protein modification; protein ubiquitination. In terms of biological role, plays an important role in the process of myofiber differentiation and maturation. Probable substrate-recognition component of a SCF-like ECS (Elongin BC-CUL2/5-SOCS-box protein) E3 ubiquitin-protein ligase complex, which mediates the ubiquitination of proteins. Probably contributes to catalysis through recognition and positioning of the substrate and the ubiquitin-conjugating enzyme. During myogenesis, controls the ubiquitination and degradation of the specific pool of CTNNB1/beta-catenin located at the sarcolemma. This Homo sapiens (Human) protein is Neuralized-like protein 2 (NEURL2).